Reading from the N-terminus, the 286-residue chain is Bifunctional protein FolD (286 aa).

NADP(+)-binding positions include 165–167 (GRS) and S190.

This sequence belongs to the tetrahydrofolate dehydrogenase/cyclohydrolase family. In terms of assembly, homodimer.

The enzyme catalyses (6R)-5,10-methylene-5,6,7,8-tetrahydrofolate + NADP(+) = (6R)-5,10-methenyltetrahydrofolate + NADPH. It catalyses the reaction (6R)-5,10-methenyltetrahydrofolate + H2O = (6R)-10-formyltetrahydrofolate + H(+). Its pathway is one-carbon metabolism; tetrahydrofolate interconversion. Its function is as follows. Catalyzes the oxidation of 5,10-methylenetetrahydrofolate to 5,10-methenyltetrahydrofolate and then the hydrolysis of 5,10-methenyltetrahydrofolate to 10-formyltetrahydrofolate. The sequence is that of Bifunctional protein FolD from Burkholderia lata (strain ATCC 17760 / DSM 23089 / LMG 22485 / NCIMB 9086 / R18194 / 383).